The primary structure comprises 271 residues: MTADIKIVVTGAAGRMGRTLIRLIHETEGLSLAGGLEGEGSPYLGTDLGTLAGLAQPTGLAATADALTLIKDADALIDFSVPAATLEFAALAAQARIVHVIGTTGFEVVDEEKIKAAARHATIVKAGNMSLGVNLLAALVRQAAKALDGQWDIEIVEMHHRHKVDAPSGTALLLGEAAAEGRGVALEDVSARGRDGITGARKAGDIGFASLRGGSVVGDHTVVFATEHERITLGHIAEDRSIFARGALKAARWGQGKGPGLFSMADVLGIE.

NAD(+) contacts are provided by residues 11-16, glutamate 37, 102-104, and 126-129; these read GAAGRM, GTT, and AGNM. Residue histidine 159 is the Proton donor/acceptor of the active site. (S)-2,3,4,5-tetrahydrodipicolinate is bound at residue histidine 160. Lysine 163 functions as the Proton donor in the catalytic mechanism. 169-170 contacts (S)-2,3,4,5-tetrahydrodipicolinate; that stretch reads GT.

The protein belongs to the DapB family.

It is found in the cytoplasm. The enzyme catalyses (S)-2,3,4,5-tetrahydrodipicolinate + NAD(+) + H2O = (2S,4S)-4-hydroxy-2,3,4,5-tetrahydrodipicolinate + NADH + H(+). It catalyses the reaction (S)-2,3,4,5-tetrahydrodipicolinate + NADP(+) + H2O = (2S,4S)-4-hydroxy-2,3,4,5-tetrahydrodipicolinate + NADPH + H(+). It participates in amino-acid biosynthesis; L-lysine biosynthesis via DAP pathway; (S)-tetrahydrodipicolinate from L-aspartate: step 4/4. Functionally, catalyzes the conversion of 4-hydroxy-tetrahydrodipicolinate (HTPA) to tetrahydrodipicolinate. This Parvibaculum lavamentivorans (strain DS-1 / DSM 13023 / NCIMB 13966) protein is 4-hydroxy-tetrahydrodipicolinate reductase.